We begin with the raw amino-acid sequence, 331 residues long: Hydroxysteroid dehydrogenase-like protein 1 (331 aa).

A required for mitochondria translocation region spans residues 2-82 (AAVDRFNLLY…TGSTDGIGKA (81 aa)). Residues 74–80 (GSTDGIG) and Asp-125 each bind NADP(+). Position 205 (Ser-205) interacts with substrate. The Proton acceptor role is filled by Tyr-218. An NADP(+)-binding site is contributed by Lys-222.

It belongs to the short-chain dehydrogenases/reductases (SDR) family. 17-beta-HSD 3 subfamily.

Its subcellular location is the mitochondrion. Its function is as follows. May catalyze the metabolism of steroid hormones and thus play an important role in sex differentiation, the emergence and maintenance of the secondary sexual characters, and the regulation of endocrine. In Gallus gallus (Chicken), this protein is Hydroxysteroid dehydrogenase-like protein 1 (HSDL1).